The chain runs to 256 residues: MIPDVGFLVLLTGALFICIKAAPATTDVDPTFEGRIVMEGDILIREEQLTERNAIALENMRWPDATIVYKLTGWYALFPGDIKKAMRHIEENTCIKFKARSNEEGYVKIYKGEKESCFADIGYFASEQRLSLGSGCKIFGRILHEMGHTIGLFHEHTRPDRDNYITVHEDNIRPGSKRNYRKTPSYMTRVIGPFDYDSIMIYGETAGSRDPMHLKSMEANKPGVTLISSRYKDRLTDLDIKKINTLYNCPGKEKFS.

The N-terminal stretch at 1 to 24 (MIPDVGFLVLLTGALFICIKAAPA) is a signal peptide. Residues 25 to 52 (TTDVDPTFEGRIVMEGDILIREEQLTER) constitute a propeptide that is removed on maturation. Residues 53 to 250 (NAIALENMRW…KKINTLYNCP (198 aa)) form the Peptidase M12A domain. Disulfide bonds link Cys-94–Cys-249 and Cys-117–Cys-136. Residue His-144 coordinates Zn(2+). Glu-145 is an active-site residue. 2 residues coordinate Zn(2+): His-148 and His-154.

Monomer. Requires Zn(2+) as cofactor. In terms of tissue distribution, expressed by the venom gland.

It is found in the secreted. With respect to regulation, inhibited by 1,10-phenanthroline. Functionally, zinc metalloprotease. Provoques deadhesion of endothelial cells from cell cultures, and also degradation of fibronectin, fibrinogen and gelatin in vitro. Its role in the venom is not fully understood but it might act as a spreading factor that facilitates diffusion of other venom toxins. Alternatively, it might be involved in the proteolytic processing of other venom toxins or it might play a role in extra-oral digestion of prey. This chain is Astacin-like metalloprotease toxin 2, found in Loxosceles intermedia (Brown spider).